Here is a 2437-residue protein sequence, read N- to C-terminus: Neurogenic locus notch homolog protein 1 (2437 aa).

Positions 1–20 are cleaved as a signal peptide; it reads MNRFLVKLTLLTAASLATVA. EGF-like domains are found at residues 21–57, 58–98, 101–138, and 139–175; these read QGQR…AQCQ, FPNP…RLCL, VNHA…KTCQ, and LADP…QTCR. Topologically, residues 21–1726 are extracellular; it reads QGQRCSEYCQ…GGPPKTGEMY (1706 aa). 111 disulfides stabilise this stretch: C25–C35, C29–C45, C47–C56, C62–C73, C67–C86, C88–C97, C105–C116, C110–C126, C128–C137, C143–C154, C148–C163, C165–C174, C181–C194, C188–C203, C205–C214, C221–C232, C226–C242, C244–C253, C260–C271, C265–C280, C282–C291, C298–C311, C305–C320, C322–C331, C338–C349, C343–C358, C360–C369, C375–C386, C380–C397, C399–C408, C415–C428, C422–C437, C439–C448, C455–C466, C460–C475, C477–C486, C493–C503, C498–C512, C514–C523, C530–C541, C535–C550, C552–C561, C568–C578, C573–C587, C589–C598, C605–C616, C610–C625, C627–C636, C643–C653, C648–C662, C664–C673, C680–C691, C685–C700, C702–C711, C718–C728, C723–C737, C739–C748, C755–C766, C760–C775, C777–C786, C793–C804, C798–C813, C815–C824, C831–C842, C836–C853, C855–C864, C871–C882, C876–C891, C893–C902, C909–C920, C914–C929, C931–C940, C947–C958, C952–C967, C969–C978, C985–C996, C990–C1005, C1007–C1016, C1023–C1034, C1028–C1043, C1045–C1054, C1061–C1072, C1066–C1081, C1083–C1092, C1099–C1120, C1114–C1129, C1131–C1140, C1147–C1158, C1152–C1167, C1169–C1178, C1185–C1196, C1190–C1205, C1207–C1216, C1223–C1242, C1236–C1251, C1253–C1262, C1269–C1282, C1274–C1291, C1293–C1302, C1309–C1320, C1314–C1332, C1334–C1343, C1350–C1361, C1355–C1370, C1372–C1381, C1389–C1400, C1394–C1411, C1413–C1422, C1447–C1470, C1452–C1465, and C1461–C1477. An EGF-like 5; calcium-binding domain is found at 177–215; sequence DVNECAVSPSPCRNGGTCINEVGSYLCRCPPEYTGPHCQ. The EGF-like 6 domain maps to 217–254; the sequence is LYQPCLPSPCRSGGTCVQTSDTTHTCSCLPGFTGQTCE. T231 carries an O-linked (Fuc...) threonine; alternate glycan. A glycan (O-linked (GalNAc...) threonine; alternate) is linked at T231. The 37-residue stretch at 256–292 folds into the EGF-like 7; calcium-binding domain; the sequence is NVDDCTQHACENGGPCIDGINTYNCHCDKHWTGQYCT. The EGF-like 8; calcium-binding domain occupies 294–332; it reads DVDECELSPNACQNGGTCHNTIGGFHCVCVNGWTGDDCS. One can recognise an EGF-like 9; calcium-binding domain in the interval 334 to 370; it reads NIDDCASAACSHGATCHDRVASFFCECPHGRTGLLCH. Positions 371–409 constitute an EGF-like 10 domain; sequence LDDACISNPCQKGSNCDTNPVSGKAICTCPPGYTGSACN. The 39-residue stretch at 411 to 449 folds into the EGF-like 11; calcium-binding domain; that stretch reads DIDECSLGANPCEHGGRCLNTKGSFQCKCLQGYEGPRCE. The EGF-like 12; calcium-binding domain maps to 451–487; sequence DVNECKSNPCQNDATCLDQIGGFHCICMPGYEGVFCQ. The EGF-like 13; calcium-binding domain occupies 489–524; the sequence is NSDDCASQPCLNGKCIDKINSFHCECPKGFSGSLCQ. Residues 526–562 form the EGF-like 14; calcium-binding domain; sequence DVDECASTPCKNGAKCTDGPNKYTCECTPGFSGIHCE. The EGF-like 15; calcium-binding domain occupies 564 to 599; that stretch reads DINECASSPCHYGVCRDGVASFTCDCRPGYTGRLCE. The region spanning 601 to 637 is the EGF-like 16; calcium-binding domain; sequence NINECLSQPCRNGGTCQDRENAYICTCPKGTTGVNCE. The EGF-like 17; calcium-binding domain occupies 639 to 674; the sequence is NIDDCKRKPCDYGKCIDKINGYECVCEPGYSGSMCN. The EGF-like 18; calcium-binding domain occupies 676–712; that stretch reads NIDDCALNPCHNGGTCIDGVNSFTCLCPDGFRDATCL. An EGF-like 19; calcium-binding domain is found at 714–749; that stretch reads QHNECSSNPCIHGSCLDQINSYRCVCEAGWMGRNCD. Residues 751–787 enclose the EGF-like 20; calcium-binding domain; sequence NINECLSNPCVNGGTCKDMTSGYLCTCRAGFSGPNCQ. In terms of domain architecture, EGF-like 21; calcium-binding spans 789–825; the sequence is NINECASNPCLNQGSCIDDVAGFKCNCMLPYTGEVCE. One can recognise an EGF-like 22 domain in the interval 827–865; that stretch reads VLAPCSPRPCKNGGVCRESEDFQSFSCNCPAGWQGQTCE. The EGF-like 23; calcium-binding domain maps to 867–903; that stretch reads DINECVRNPCTNGGVCENLRGGFQCRCNPGFTGALCE. An EGF-like 24; calcium-binding domain is found at 905-941; the sequence is DIDDCEPNPCSNGGVCQDRVNGFVCVCLAGFRGERCA. Positions 943–979 constitute an EGF-like 25; calcium-binding domain; sequence DIDECVSAPCRNGGNCTDCVNSYTCSCPAGFSGINCE. A glycan (N-linked (GlcNAc...) asparagine) is linked at N957. The EGF-like 26 domain maps to 981–1017; sequence NTPDCTESSCFNGGTCVDGISSFSCVCLPGFTGNYCQ. In terms of domain architecture, EGF-like 27; calcium-binding spans 1019-1055; that stretch reads DVNECDSRPCQNGGSCQDGYGTYKCTCPHGYTGLNCQ. EGF-like domains are found at residues 1057-1093 and 1095-1141; these read LVRW…IYCD and PSVS…SYCQ. Residues 1143-1179 form the EGF-like 30; calcium-binding domain; it reads QVDECQPNPCQNGATCTDYLGGYSCECVPGYHGMNCS. N1177 carries N-linked (GlcNAc...) asparagine glycosylation. An EGF-like 31; calcium-binding domain is found at 1181–1217; it reads EINECLSQPCQNGGTCIDLVNTYKCSCPRGTQGVHCE. One can recognise an EGF-like 32; calcium-binding domain in the interval 1219–1263; the sequence is DIDDCSPSVDPLTGEPRCFNGGRCVDRVGGYGCVCPAGFVGERCE. EGF-like domains lie at 1265–1303, 1305–1344, 1346–1382, and 1385–1423; these read DVNE…KRCE, VFNG…SSCE, DSQS…HECQ, and MDSP…LLCH. An O-linked (Fuc...) threonine; alternate glycan is attached at T1399. O-linked (GalNAc...) threonine; alternate glycosylation occurs at T1399. 3 LNR repeats span residues 1447 to 1487, 1488 to 1525, and 1526 to 1566; these read CEIA…PWQN, CSAA…LEGQ, and CNPL…VPQK. Residue N1487 is glycosylated (N-linked (GlcNAc...) asparagine). 6 cysteine pairs are disulfide-bonded: C1488-C1512, C1494-C1507, C1503-C1519, C1526-C1552, C1534-C1547, and C1543-C1559. The N-linked (GlcNAc...) asparagine glycan is linked to N1585. The chain crosses the membrane as a helical span at residues 1727–1747; the sequence is PMFLVLLALAVLALAAVGVVV. Topologically, residues 1748 to 2437 are cytoplasmic; the sequence is SRKRKREHGQ…QMNHIPEAFK (690 aa). The tract at residues 1770–1790 is disordered; it reads KKKRREPVGEDSVGLKPLKNS. ANK repeat units lie at residues 1867–1910, 1915–1944, 1948–1978, 1982–2011, 2015–2044, and 2048–2077; these read DGFT…NLHN, TGET…DANV, MGRT…DLDA, DGTT…DPNA, SGKS…NKDL, and KEET…NRDI. Disordered stretches follow at residues 2127 to 2174 and 2356 to 2437; these read IKPS…GGIM and RMAP…EAFK. Residues 2356–2387 are compositionally biased toward polar residues; it reads RMAPPISSTQFLTPPSQHSYSNPMDNTPNHQQ. Positions 2396–2411 are enriched in low complexity; sequence PSAGSPDQWSSSSPHS. A compositionally biased stretch (polar residues) spans 2412-2429; that stretch reads NLSDWSEGISSPPTSMQM.

This sequence belongs to the NOTCH family. Synthesized in the endoplasmic reticulum as an inactive form which is proteolytically cleaved by a furin-like convertase in the trans-Golgi network before it reaches the plasma membrane to yield an active, ligand-accessible form. Cleavage results in a C-terminal fragment N(TM) and a N-terminal fragment N(EC). Following ligand binding, it is cleaved by adam17 to yield a membrane-associated intermediate fragment called notch extracellular truncation (NEXT). Following endocytosis, this fragment is then cleaved by presenilin dependent gamma-secretase to release a Notch-derived peptide containing the intracellular domain (NICD) from the membrane. In terms of processing, O-glycosylated on the EGF-like domains. Contains both O-linked fucose and O-linked glucose. O-linked glycosylation by galnt11 is involved in determination of left/right symmetry: glycosylation promotes activation of notch1, possibly by promoting cleavage by adam17, modulating the balance between motile and immotile (sensory) cilia at the left-right organiser (LRO).

Its subcellular location is the cell membrane. It localises to the nucleus. Its function is as follows. Functions as a receptor for membrane-bound ligands Jagged-1 (JAG1), Jagged-2 (JAG2) and Delta-1 (DLL1) to regulate cell-fate determination. Upon ligand activation through the released notch intracellular domain (NICD) it forms a transcriptional activator complex with RBPJ/RBPSUH and activates genes of the enhancer of split locus. Affects the implementation of differentiation, proliferation and apoptotic programs. Involved in angiogenesis; negatively regulates endothelial cell proliferation and migration and angiogenic sprouting. Involved in the maturation of both CD4(+) and CD8(+) cells in the thymus. Important for follicular differentiation and possibly cell fate selection within the follicle. During cerebellar development, functions as a receptor for neuronal DNER and is involved in the differentiation of Bergmann glia. Represses neuronal and myogenic differentiation. May play an essential role in postimplantation development, probably in some aspect of cell specification and/or differentiation. May be involved in mesoderm development, somite formation and neurogenesis. Involved in determination of left/right symmetry by modulating the balance between motile and immotile (sensory) cilia at the left-right organiser (LRO). This chain is Neurogenic locus notch homolog protein 1 (notch1a), found in Danio rerio (Zebrafish).